The following is a 305-amino-acid chain: Sulfate adenylyltransferase subunit 2 (305 aa).

The protein belongs to the PAPS reductase family. CysD subfamily. Heterodimer composed of CysD, the smaller subunit, and CysN.

It catalyses the reaction sulfate + ATP + H(+) = adenosine 5'-phosphosulfate + diphosphate. The protein operates within sulfur metabolism; hydrogen sulfide biosynthesis; sulfite from sulfate: step 1/3. Its function is as follows. With CysN forms the ATP sulfurylase (ATPS) that catalyzes the adenylation of sulfate producing adenosine 5'-phosphosulfate (APS) and diphosphate, the first enzymatic step in sulfur assimilation pathway. APS synthesis involves the formation of a high-energy phosphoric-sulfuric acid anhydride bond driven by GTP hydrolysis by CysN coupled to ATP hydrolysis by CysD. This is Sulfate adenylyltransferase subunit 2 from Ectopseudomonas mendocina (strain ymp) (Pseudomonas mendocina).